The chain runs to 407 residues: Arylacetamide deacetylase-like 4 (407 aa).

Residues 1–4 are Cytoplasmic-facing; it reads MAVP. The chain crosses the membrane as a helical; Signal-anchor for type II membrane protein span at residues 5–25; that stretch reads WLVLLLALPIFFLGVFVWAVF. Over 26 to 407 the chain is Lumenal; that stretch reads EHFLTTDIPA…NAVVSYIKGI (382 aa). The short motif at 119–121 is the Involved in the stabilization of the negatively charged intermediate by the formation of the oxyanion hole element; sequence HGG. Asn-168 carries an N-linked (GlcNAc...) asparagine glycan. Residue Ser-193 is part of the active site. Asn-269 carries N-linked (GlcNAc...) asparagine glycosylation. Catalysis depends on residues Asp-347 and His-377.

Belongs to the 'GDXG' lipolytic enzyme family.

It localises to the membrane. The polypeptide is Arylacetamide deacetylase-like 4 (AADACL4) (Homo sapiens (Human)).